The following is a 388-amino-acid chain: Succinate--CoA ligase [ADP-forming] subunit beta (388 aa).

The ATP-grasp domain occupies 9–236 (KKLFAEHGVP…VAAVDPLEQK (228 aa)). Residues Lys-45, 52–54 (GRG), Glu-91, Ser-94, and Glu-99 contribute to the ATP site. 2 residues coordinate Mg(2+): Asn-191 and Asp-205. Substrate is bound by residues Asn-256 and 318-320 (GIT).

It belongs to the succinate/malate CoA ligase beta subunit family. As to quaternary structure, heterotetramer of two alpha and two beta subunits. Mg(2+) serves as cofactor.

The catalysed reaction is succinate + ATP + CoA = succinyl-CoA + ADP + phosphate. It carries out the reaction GTP + succinate + CoA = succinyl-CoA + GDP + phosphate. It participates in carbohydrate metabolism; tricarboxylic acid cycle; succinate from succinyl-CoA (ligase route): step 1/1. In terms of biological role, succinyl-CoA synthetase functions in the citric acid cycle (TCA), coupling the hydrolysis of succinyl-CoA to the synthesis of either ATP or GTP and thus represents the only step of substrate-level phosphorylation in the TCA. The beta subunit provides nucleotide specificity of the enzyme and binds the substrate succinate, while the binding sites for coenzyme A and phosphate are found in the alpha subunit. The polypeptide is Succinate--CoA ligase [ADP-forming] subunit beta (Frankia casuarinae (strain DSM 45818 / CECT 9043 / HFP020203 / CcI3)).